A 224-amino-acid chain; its full sequence is Putative O-methyltransferase MLBr01075 (224 aa).

Residues Val-51, Glu-73, 75–76 (GT), Ser-81, Asp-99, and Ile-100 contribute to the S-adenosyl-L-methionine site. Residue Asp-147 participates in substrate binding. Asp-149 is an S-adenosyl-L-methionine binding site.

It belongs to the class I-like SAM-binding methyltransferase superfamily. Cation-dependent O-methyltransferase family.

This Mycobacterium leprae (strain Br4923) protein is Putative O-methyltransferase MLBr01075.